Consider the following 570-residue polypeptide: Dual specificity testis-specific protein kinase 2 (570 aa).

The Protein kinase domain maps to 58-313 (DFTREKIGSG…EIGKTLKEIM (256 aa)). Residues 64-72 (IGSGFFSEV) and K87 contribute to the ATP site. The active-site Proton acceptor is D176. S219 bears the Phosphoserine; by autocatalysis mark. Basic and acidic residues predominate over residues 316-327 (LPEEELERDRKL). The disordered stretch occupies residues 316–357 (LPEEELERDRKLQPTAKGPLEKVPGGKRLSSLDDKIPHKSPR). Phosphoserine is present on residues S369, S456, and S460. Residues 511 to 530 (AMDCSNPQEENGFGPRLKGT) form a disordered region.

It belongs to the protein kinase superfamily. TKL Ser/Thr protein kinase family. It depends on Mg(2+) as a cofactor. Mn(2+) serves as cofactor.

The protein localises to the nucleus. The catalysed reaction is L-seryl-[protein] + ATP = O-phospho-L-seryl-[protein] + ADP + H(+). The enzyme catalyses L-threonyl-[protein] + ATP = O-phospho-L-threonyl-[protein] + ADP + H(+). It catalyses the reaction L-tyrosyl-[protein] + ATP = O-phospho-L-tyrosyl-[protein] + ADP + H(+). Activated by autophosphorylation on Ser-219. Its function is as follows. Dual specificity protein kinase activity catalyzing autophosphorylation and phosphorylation of exogenous substrates on both serine/threonine and tyrosine residues. Phosphorylates cofilin at 'Ser-3'. May play an important role in spermatogenesis. This chain is Dual specificity testis-specific protein kinase 2 (Tesk2), found in Mus musculus (Mouse).